The following is a 96-amino-acid chain: Aspartyl/glutamyl-tRNA(Asn/Gln) amidotransferase subunit C (96 aa).

It belongs to the GatC family. As to quaternary structure, heterotrimer of A, B and C subunits.

It catalyses the reaction L-glutamyl-tRNA(Gln) + L-glutamine + ATP + H2O = L-glutaminyl-tRNA(Gln) + L-glutamate + ADP + phosphate + H(+). The catalysed reaction is L-aspartyl-tRNA(Asn) + L-glutamine + ATP + H2O = L-asparaginyl-tRNA(Asn) + L-glutamate + ADP + phosphate + 2 H(+). Functionally, allows the formation of correctly charged Asn-tRNA(Asn) or Gln-tRNA(Gln) through the transamidation of misacylated Asp-tRNA(Asn) or Glu-tRNA(Gln) in organisms which lack either or both of asparaginyl-tRNA or glutaminyl-tRNA synthetases. The reaction takes place in the presence of glutamine and ATP through an activated phospho-Asp-tRNA(Asn) or phospho-Glu-tRNA(Gln). The sequence is that of Aspartyl/glutamyl-tRNA(Asn/Gln) amidotransferase subunit C from Chloroflexus aggregans (strain MD-66 / DSM 9485).